The following is a 357-amino-acid chain: Serpentine receptor class epsilon-30 (357 aa).

Helical transmembrane passes span 31–51 (IFEL…IFVM), 61–81 (LMFL…GKFI), 121–141 (LLIF…FGIL), 165–185 (IPII…LAII), 192–212 (FLAR…FLFI), 253–273 (LVVV…ALTF), and 283–303 (LIEN…MFSI).

Belongs to the nematode receptor-like protein sre family.

It localises to the membrane. In Caenorhabditis elegans, this protein is Serpentine receptor class epsilon-30 (sre-30).